An 843-amino-acid polypeptide reads, in one-letter code: MPLSYQHFRKLLLLDDEAGPLEEELPRLADEGLNRRVAEDLNLGNLNVSIPWTHKVGNFTGLYSSTVPVFNPEWQTPSFPNIHLQEDIINRCQQYVGPLTVNEKRRLKLIMPARFYPNLTKYLPLDKGIKPYYPEHAVNHYFKTRHYLHTLWQAGILYKRETTRSASFCGSPYSWEQELQHGRLVFQTSTRHGDESFCSQSSGILSRSPVGPCVRSQLKQSRLGLQPQQGSLARGKSGRSGSIRARVHPTTRRSFGVEPSGSGHIDNSASSASSCLHQSAVRKTAYSHLSTSKRQSSSGHAVELHNIPPSSARSQSEGPIFSCWWLQFRNSKPCSDYCLSHIVNLLEDWGPCTEHGEHNIRIPRTPARVTGGVFLVDKNPHNTTESRLVVDFSQFSRGSTHVSWPKFAVPNLQSLTNLLSSNLSWLSLDVSAAFYHIPLHPAAMPHLLVGSSGLPRYVARLSSTSRNINYQHGTMQDLHDSCSRNLYVSLLLLYKTFGRKLHLYSHPIILGFRKIPMGVGLSPFLLAQFTSAICSVVRRAFPHCLAFSYMDDVVLGAKSVQHLESLFTSVTNFLLSLGIHLNPNKTKRWGYSLNFMGYVIGSWGTLPQEHIVLKIKQCFRKLPVNRPIDWKVCQRIVGLLGFAAPFTQCGYPALMPLYACIQSKQAFTFSPTYKAFLCQQYLHLYPVARQRSGLCQVFADATPTGWGLAIGHRRMRGTFVAPLPIHTAELLAACFARSRSGAKLIGTDNSVVLSRKYTSFPWLLGCAANWILRGTSFVYVPSALNPADDPSRGRLGLYRPLLRLPFQPTTGRTSLYAVSPSVPSHLPDRVHFASPLHVAWKPP.

Residues 1-177 (MPLSYQHFRK…FCGSPYSWEQ (177 aa)) form a terminal protein domain (TP) region. A spacer region spans residues 178–346 (ELQHGRLVFQ…YCLSHIVNLL (169 aa)). Disordered stretches follow at residues 218 to 243 (LKQS…SGSI) and 290 to 316 (STSK…RSQS). A compositionally biased stretch (polar residues) spans 290-299 (STSKRQSSSG). The polymerase/reverse transcriptase domain (RT) stretch occupies residues 347 to 690 (EDWGPCTEHG…YLHLYPVARQ (344 aa)). The region spanning 357 to 600 (EHNIRIPRTP…YSLNFMGYVI (244 aa)) is the Reverse transcriptase domain. Residues aspartate 429, aspartate 551, and aspartate 552 each coordinate Mg(2+).

It belongs to the hepadnaviridae P protein family.

It carries out the reaction DNA(n) + a 2'-deoxyribonucleoside 5'-triphosphate = DNA(n+1) + diphosphate. The catalysed reaction is Endonucleolytic cleavage to 5'-phosphomonoester.. With respect to regulation, activated by host HSP70 and HSP40 in vitro to be able to bind the epsilon loop of the pgRNA. Because deletion of the RNase H region renders the protein partly chaperone-independent, the chaperones may be needed indirectly to relieve occlusion of the RNA-binding site by this domain. Inhibited by several reverse-transcriptase inhibitors: Lamivudine, Adefovir and Entecavir. Multifunctional enzyme that converts the viral RNA genome into dsDNA in viral cytoplasmic capsids. This enzyme displays a DNA polymerase activity that can copy either DNA or RNA templates, and a ribonuclease H (RNase H) activity that cleaves the RNA strand of RNA-DNA heteroduplexes in a partially processive 3'- to 5'-endonucleasic mode. Neo-synthesized pregenomic RNA (pgRNA) are encapsidated together with the P protein, and reverse-transcribed inside the nucleocapsid. Initiation of reverse-transcription occurs first by binding the epsilon loop on the pgRNA genome, and is initiated by protein priming, thereby the 5'-end of (-)DNA is covalently linked to P protein. Partial (+)DNA is synthesized from the (-)DNA template and generates the relaxed circular DNA (RC-DNA) genome. After budding and infection, the RC-DNA migrates in the nucleus, and is converted into a plasmid-like covalently closed circular DNA (cccDNA). The activity of P protein does not seem to be necessary for cccDNA generation, and is presumably released from (+)DNA by host nuclear DNA repair machinery. This is Protein P from Homo sapiens (Human).